The sequence spans 475 residues: Secreted triacylglycerol lipase LIP5 (475 aa).

The N-terminal stretch at 1 to 19 (MYPCTLLMVLLCLAIMTHG) is a signal peptide. The cysteines at positions 129 and 300 are disulfide-linked. Catalysis depends on Ser-213, which acts as the Nucleophile. Asn-246 and Asn-312 each carry an N-linked (GlcNAc...) asparagine glycan. Asp-360 is a catalytic residue. The N-linked (GlcNAc...) asparagine glycan is linked to Asn-369. His-394 is an active-site residue. Asn-471 carries N-linked (GlcNAc...) asparagine glycosylation.

The protein belongs to the AB hydrolase superfamily. Lipase family. Class Lip subfamily.

The enzyme catalyses a triacylglycerol + H2O = a diacylglycerol + a fatty acid + H(+). It carries out the reaction a monoacylglycerol + H2O = glycerol + a fatty acid + H(+). It catalyses the reaction a diacylglycerol + H2O = a monoacylglycerol + a fatty acid + H(+). Secreted lipase involved in Dandruff and seborrheic dermatitis (D/SD) probably via lipase-mediated breakdown of sebaceous lipids and release of irritating free fatty acids. Has triacylglycerol lipase activity and is able to hydrolyze triolein. Mostly converts monoolein to di- and triolein, while free fatty acids are only produced in low amounts. The sequence is that of Secreted triacylglycerol lipase LIP5 from Malassezia globosa (strain ATCC MYA-4612 / CBS 7966) (Dandruff-associated fungus).